A 291-amino-acid chain; its full sequence is Deaminated glutathione amidase (291 aa).

The CN hydrolase domain maps to 13–268; that stretch reads KRIGLGQITS…NDIAFVDIDL (256 aa). E52 serves as the catalytic Proton acceptor. K130 acts as the Proton donor in catalysis. The active-site Nucleophile is C172.

Belongs to the carbon-nitrogen hydrolase superfamily. NIT1/NIT2 family.

The enzyme catalyses N-(4-oxoglutaryl)-L-cysteinylglycine + H2O = L-cysteinylglycine + 2-oxoglutarate. Functionally, catalyzes the hydrolysis of the amide bond in N-(4-oxoglutarate)-L-cysteinylglycine (deaminated glutathione), a metabolite repair reaction to dispose of the harmful deaminated glutathione. This chain is Deaminated glutathione amidase (nit1-1), found in Dictyostelium discoideum (Social amoeba).